A 495-amino-acid chain; its full sequence is Amidophosphoribosyltransferase (495 aa).

Residues 1 to 22 (MFPPSSDLTELNDGQPLSGHHA) are disordered. Positions 1 to 28 (MFPPSSDLTELNDGQPLSGHHADKPEEA) are excised as a propeptide. The active-site Nucleophile is cysteine 29. The region spanning 29–254 (CGVFGIYAPE…AGELVHITES (226 aa)) is the Glutamine amidotransferase type-2 domain. Residue cysteine 270 participates in [4Fe-4S] cluster binding. Positions 317, 379, and 380 each coordinate Mg(2+). Positions 416, 467, and 470 each coordinate [4Fe-4S] cluster.

The protein in the C-terminal section; belongs to the purine/pyrimidine phosphoribosyltransferase family. Requires Mg(2+) as cofactor. The cofactor is [4Fe-4S] cluster.

It catalyses the reaction 5-phospho-beta-D-ribosylamine + L-glutamate + diphosphate = 5-phospho-alpha-D-ribose 1-diphosphate + L-glutamine + H2O. It functions in the pathway purine metabolism; IMP biosynthesis via de novo pathway; N(1)-(5-phospho-D-ribosyl)glycinamide from 5-phospho-alpha-D-ribose 1-diphosphate: step 1/2. In terms of biological role, catalyzes the formation of phosphoribosylamine from phosphoribosylpyrophosphate (PRPP) and glutamine. This is Amidophosphoribosyltransferase from Synechocystis sp. (strain ATCC 27184 / PCC 6803 / Kazusa).